The sequence spans 306 residues: Immune protein Tsi7 (306 aa).

In terms of assembly, interacts with Tse7.

Immunity protein that plays a role in preventing early activation of toxin Tse7. Protects thereby cells from Tse7 DNase activity. The polypeptide is Immune protein Tsi7 (Pseudomonas aeruginosa (strain ATCC 15692 / DSM 22644 / CIP 104116 / JCM 14847 / LMG 12228 / 1C / PRS 101 / PAO1)).